The primary structure comprises 360 residues: Phospho-N-acetylmuramoyl-pentapeptide-transferase (360 aa).

Helical transmembrane passes span 27–47, 71–91, 93–113, 128–148, 168–188, 199–219, 239–259, 262–282, 288–308, and 337–357; these read GAMITSALIVFLFGPSIINSL, TPTMGGLMIMTGILVSCLLWA, LASVYVWVVLLVTVGFGAIGF, FSGKARLGIEFLIAAVAAFVI, FVVNLSWFFIPFAAFVMVGAG, GLAIVPVMVAAASFGFIAYLS, LAVVLGAVIGAGLGFLWFNAP, AIFMGDTGSLALGGMLGTVAV, IVLAIIGGLFVVEALSVIIQV, and QVVIRFWIVAIILAMIGLSTL.

This sequence belongs to the glycosyltransferase 4 family. MraY subfamily. It depends on Mg(2+) as a cofactor.

It is found in the cell inner membrane. The enzyme catalyses UDP-N-acetyl-alpha-D-muramoyl-L-alanyl-gamma-D-glutamyl-meso-2,6-diaminopimeloyl-D-alanyl-D-alanine + di-trans,octa-cis-undecaprenyl phosphate = di-trans,octa-cis-undecaprenyl diphospho-N-acetyl-alpha-D-muramoyl-L-alanyl-D-glutamyl-meso-2,6-diaminopimeloyl-D-alanyl-D-alanine + UMP. Its pathway is cell wall biogenesis; peptidoglycan biosynthesis. Catalyzes the initial step of the lipid cycle reactions in the biosynthesis of the cell wall peptidoglycan: transfers peptidoglycan precursor phospho-MurNAc-pentapeptide from UDP-MurNAc-pentapeptide onto the lipid carrier undecaprenyl phosphate, yielding undecaprenyl-pyrophosphoryl-MurNAc-pentapeptide, known as lipid I. The protein is Phospho-N-acetylmuramoyl-pentapeptide-transferase of Brucella anthropi (strain ATCC 49188 / DSM 6882 / CCUG 24695 / JCM 21032 / LMG 3331 / NBRC 15819 / NCTC 12168 / Alc 37) (Ochrobactrum anthropi).